A 368-amino-acid polypeptide reads, in one-letter code: Agmatine deiminase (368 aa).

Catalysis depends on C357, which acts as the Amidino-cysteine intermediate.

It belongs to the agmatine deiminase family. As to quaternary structure, homodimer.

It catalyses the reaction agmatine + H2O = N-carbamoylputrescine + NH4(+). The protein operates within amine and polyamine biosynthesis; putrescine biosynthesis via agmatine pathway; N-carbamoylputrescine from agmatine: step 1/1. Functionally, mediates the hydrolysis of agmatine into N-carbamoylputrescine in the arginine decarboxylase (ADC) pathway of putrescine biosynthesis, a basic polyamine. In Pseudomonas putida (strain ATCC 47054 / DSM 6125 / CFBP 8728 / NCIMB 11950 / KT2440), this protein is Agmatine deiminase.